Consider the following 114-residue polypeptide: Thioredoxin H1 (114 aa).

Residue A2 is modified to N-acetylalanine. The 113-residue stretch at 2–114 folds into the Thioredoxin domain; the sequence is ASEEGQVIAC…LQSTIAKHLA (113 aa). Active-site nucleophile residues include C40 and C43. C40 and C43 are joined by a disulfide.

The protein belongs to the thioredoxin family. Plant H-type subfamily. Interacts with FBA6. Interacts with MDH1.

The protein resides in the cytoplasm. Its function is as follows. Thiol-disulfide oxidoreductase involved in the redox regulation of a number of cytosolic enzymes. Activates the cytosolic malate dehydrogenase (MDH) probably by reducing an interchain disulfide bond of the inactive MDH homodimer. Possesses insulin disulfide bonds reducing activity. The chain is Thioredoxin H1 (TRX1) from Arabidopsis thaliana (Mouse-ear cress).